We begin with the raw amino-acid sequence, 590 residues long: Negative elongation factor D (590 aa).

A disordered region spans residues 15-43 (FGSAAEWGDEADGGQQEDDYGEGEDDAEV). Acidic residues predominate over residues 21 to 43 (WGDEADGGQQEDDYGEGEDDAEV).

It belongs to the NELF-D family. The NELF complex is composed of NELFA, NELFB, NELFCD and NELFE; NELFA and NELFCD form a stable subcomplex that binds primarily through NELFCD to the N-terminus of NELFB. Binds RNA which may help to stabilize the NELF complex on nucleic acid. In vitro, the NELFA:NELFCD subcomplex binds to ssDNA and ssRNA in a sequence- and structure-dependent manner. Interacts with ARAF1. Interacts with PCF11. Interacts with NELFB. Interacts with KAT8.

The protein localises to the nucleus. In terms of biological role, essential component of the NELF complex, a complex that negatively regulates the elongation of transcription by RNA polymerase II. The NELF complex, which acts via an association with the DSIF complex and causes transcriptional pausing, is counteracted by the P-TEFb kinase complex. The protein is Negative elongation factor D (NELFCD) of Sus scrofa (Pig).